The chain runs to 118 residues: Large ribosomal subunit protein uL18 (118 aa).

Belongs to the universal ribosomal protein uL18 family. As to quaternary structure, part of the 50S ribosomal subunit; part of the 5S rRNA/L5/L18/L25 subcomplex. Contacts the 5S and 23S rRNAs.

This is one of the proteins that bind and probably mediate the attachment of the 5S RNA into the large ribosomal subunit, where it forms part of the central protuberance. The polypeptide is Large ribosomal subunit protein uL18 (Rickettsia conorii (strain ATCC VR-613 / Malish 7)).